Consider the following 145-residue polypeptide: D-aminoacyl-tRNA deacylase (145 aa).

The Gly-cisPro motif, important for rejection of L-amino acids motif lies at Gly-137 to Pro-138.

Belongs to the DTD family. As to quaternary structure, homodimer.

Its subcellular location is the cytoplasm. The enzyme catalyses glycyl-tRNA(Ala) + H2O = tRNA(Ala) + glycine + H(+). It catalyses the reaction a D-aminoacyl-tRNA + H2O = a tRNA + a D-alpha-amino acid + H(+). In terms of biological role, an aminoacyl-tRNA editing enzyme that deacylates mischarged D-aminoacyl-tRNAs. Also deacylates mischarged glycyl-tRNA(Ala), protecting cells against glycine mischarging by AlaRS. Acts via tRNA-based rather than protein-based catalysis; rejects L-amino acids rather than detecting D-amino acids in the active site. By recycling D-aminoacyl-tRNA to D-amino acids and free tRNA molecules, this enzyme counteracts the toxicity associated with the formation of D-aminoacyl-tRNA entities in vivo and helps enforce protein L-homochirality. The protein is D-aminoacyl-tRNA deacylase of Salmonella choleraesuis (strain SC-B67).